A 375-amino-acid chain; its full sequence is MNTNNEETFYQAMRRKGVSRRSFLKYCSLAATSLGLGAAMTPRIAWALENKPRIPVVWIHGLECTCCTESFIRSSHPLAKDVILSLISLDYDDTLMAAAGTQAEEVFEDILSRYHGRYILAVEGNPPLGEQGMFCISGGRPFIEKAKRAAAGASAIIAWGTCASWGCVQAARPNPTQATPIDKVITDKPIVKVPGCPPIPDVMSAIITYMVTFDRLPELDRLGRPLMFYGQRIHDKCYRRAHFDAGEFVESWDDDAARKGYCLYKMGCKGPTTYNACSTTRWNGGVSFPIQSGHGCLGCSENGFWDRGSFYSRVVDIPQMGTHSTADTVGLTALGVVASSVGVHAVASAVNQHNRHKQQLADAGQQSPDNEDKQA.

The segment at residues M1–A47 is a signal peptide (tat-type signal). [4Fe-4S] cluster-binding residues include C64, C67, C162, C196, H234, C237, C262, and C268. C277, C296, and C299 together coordinate [3Fe-4S] cluster. Residues H353 to A375 form a disordered region.

Belongs to the [NiFe]/[NiFeSe] hydrogenase small subunit family. In terms of assembly, heterodimer of a large and a small subunit. The cofactor is [4Fe-4S] cluster. It depends on [3Fe-4S] cluster as a cofactor. Predicted to be exported by the Tat system. The position of the signal peptide cleavage has not been experimentally proven.

It localises to the cell membrane. The enzyme catalyses H2 + A = AH2. This Citrobacter freundii protein is Hydrogenase-1 small chain (hyaA).